We begin with the raw amino-acid sequence, 303 residues long: Glutamyl-Q tRNA(Asp) synthetase (303 aa).

L-glutamate contacts are provided by residues 9 to 13 and E45; that span reads RFAPS. The 'HIGH' region signature appears at 12–22; it reads PSPTGAMHLGN. Residues C100, C102, Y125, and C129 each contribute to the Zn(2+) site. Residues Y184 and R202 each coordinate L-glutamate. The 'KMSKS' region motif lies at 240 to 244; sequence RLAKR. K243 lines the ATP pocket.

Belongs to the class-I aminoacyl-tRNA synthetase family. GluQ subfamily. Requires Zn(2+) as cofactor.

Catalyzes the tRNA-independent activation of glutamate in presence of ATP and the subsequent transfer of glutamate onto a tRNA(Asp). Glutamate is transferred on the 2-amino-5-(4,5-dihydroxy-2-cyclopenten-1-yl) moiety of the queuosine in the wobble position of the QUC anticodon. This chain is Glutamyl-Q tRNA(Asp) synthetase, found in Deinococcus geothermalis (strain DSM 11300 / CIP 105573 / AG-3a).